The sequence spans 81 residues: MELTLGLVAIASAILIAFGALGTAIGFGLLGGRFLEAVARQPELAPQLQTRMFLIAGLLDAVPMIGVGIGLFFIFANPFVG.

Helical transmembrane passes span 7–27 and 55–75; these read LVAI…AIGF and IAGL…FFIF.

The protein belongs to the ATPase C chain family. F-type ATPases have 2 components, F(1) - the catalytic core - and F(0) - the membrane proton channel. F(1) has five subunits: alpha(3), beta(3), gamma(1), delta(1), epsilon(1). F(0) has three main subunits: a(1), b(2) and c(10-14). The alpha and beta chains form an alternating ring which encloses part of the gamma chain. F(1) is attached to F(0) by a central stalk formed by the gamma and epsilon chains, while a peripheral stalk is formed by the delta and b chains.

It localises to the cell inner membrane. In terms of biological role, f(1)F(0) ATP synthase produces ATP from ADP in the presence of a proton or sodium gradient. F-type ATPases consist of two structural domains, F(1) containing the extramembraneous catalytic core and F(0) containing the membrane proton channel, linked together by a central stalk and a peripheral stalk. During catalysis, ATP synthesis in the catalytic domain of F(1) is coupled via a rotary mechanism of the central stalk subunits to proton translocation. Key component of the F(0) channel; it plays a direct role in translocation across the membrane. A homomeric c-ring of between 10-14 subunits forms the central stalk rotor element with the F(1) delta and epsilon subunits. In Acinetobacter baumannii (strain ACICU), this protein is ATP synthase subunit c.